The chain runs to 251 residues: MNSSYHRRVPVVGELGSATSSQLPSTSPSIVIPLGSTEQHGPHLPLDTDTRIATAVARTVTARLHAEDLPIAQEEWLMAPAIAYGASGEHQRFAGTISIGTEALTMLLVEYGRSAACWARRLVFVNGHGGNVGALTRAVGLLRAEGRDAGWCPCTCPGGDPHAGHTETSVLLHLSPADVRTERWRAGNRAPLPVLLPSMRRGGVAAVSETGVLGDPTTATAAEGRRIFAAMVDDCVRRVARWMPQPDGMLT.

Residues glutamate 38, histidine 40, aspartate 49, histidine 128, and glutamate 167 each contribute to the a divalent metal cation site.

The protein belongs to the creatininase superfamily. Homooctamer. Fe(2+) serves as cofactor. The cofactor is Zn(2+).

It carries out the reaction [mycofactocin precursor peptide]-C-terminal glycyl-N-{5-[(4-hydroxyphenyl)methyl]-4,4-dimethyl-2-oxopyrrolidin-3-yl}acetamide + H2O = [mycofactocin precursor peptide]-C-terminal glycine + 3-amino-5-[(4-hydroxyphenyl)methyl]-4,4-dimethyl-2-pyrrolidin-2-one. Peptidase involved in the biosynthesis of the enzyme cofactor mycofactocin (MFT). Catalyzes cleavage of the MftC-modified MftA peptide to liberate its final two residues, which consist of a cross-linked valine-decarboxylated tyrosine dipeptide (named 3-amino-5-[(4-hydroxyphenyl)methyl]-4,4-dimethyl-2-pyrrolidin-2-one or ADHP). The protein is Mycofactocin precursor peptide peptidase (mftE) of Mycobacterium tuberculosis (strain CDC 1551 / Oshkosh).